The primary structure comprises 307 residues: Serine/threonine-protein phosphatase PP2A-5 catalytic subunit (307 aa).

The Mn(2+) site is built by D55, H57, D83, and N115. H116 serves as the catalytic Proton donor. H165 and H239 together coordinate Mn(2+). Position 307 is a leucine methyl ester (L307).

The protein belongs to the PPP phosphatase family. PP-2A subfamily. In terms of assembly, PP2A consists of a common heterodimeric core enzyme, composed of a 36 kDa catalytic subunit (subunit C) and a 65 kDa constant regulatory subunit (subunit A), that associates with a variety of regulatory subunits such as subunits B (the R2/B/PR55/B55, R3/B''/PR72/PR130/PR59 and R5/B'/B56 families). Also interacts with CHIP and TAF12B. Interacts with B'THETA. Interacts with CLC-A, CLC-B, CLC-C and CLC-G. It depends on Mn(2+) as a cofactor. Post-translationally, reversibly methyl esterified on Leu-307 by leucine carboxyl methyltransferase 1 (LCMT1) and pectin methylesterase 1 (PME1). Carboxyl methylation influences the affinity of the catalytic subunit for the different regulatory subunits, thereby modulating the PP2A holoenzyme's substrate specificity, enzyme activity and cellular localization. In terms of processing, phosphorylation of either threonine (by autophosphorylation-activated protein kinase) or tyrosine results in inactivation of the phosphatase. Auto-dephosphorylation has been suggested as a mechanism for reactivation. Ubiquitinated. CHIP-mediated ubiquitination enhances phosphatase activity after an abiotic stress such as low temperature or darkness.

It is found in the cytoplasm. Its subcellular location is the cytosol. It localises to the peroxisome. It carries out the reaction O-phospho-L-seryl-[protein] + H2O = L-seryl-[protein] + phosphate. The catalysed reaction is O-phospho-L-threonyl-[protein] + H2O = L-threonyl-[protein] + phosphate. In terms of biological role, associates with the serine/threonine-protein phosphatase PP2A regulatory subunits A and B' to positively regulates beta-oxidation of fatty acids and protoauxins in peroxisomes by dephosphorylating peroxisomal beta-oxidation-related proteins. Involved in the positive regulation of salt stress responses. May function by increasing chloride channel activities on vacuolar membranes. This chain is Serine/threonine-protein phosphatase PP2A-5 catalytic subunit, found in Arabidopsis thaliana (Mouse-ear cress).